The primary structure comprises 70 residues: Small ribosomal subunit protein bS21 (70 aa).

Belongs to the bacterial ribosomal protein bS21 family.

The protein is Small ribosomal subunit protein bS21 of Polaromonas naphthalenivorans (strain CJ2).